Consider the following 328-residue polypeptide: Phosphatidate cytidylyltransferase (328 aa).

Polar residues predominate over residues 15–29 (SGRSATKSVTTNDAG). Residues 15–50 (SGRSATKSVTTNDAGTGNPAEQPARGAKQQPATETS) form a disordered region. The next 7 helical transmembrane spans lie at 58–78 (AAIV…VFVP), 103–123 (AGYL…VWLT), 124–144 (WPFG…VCMI), 173–193 (ATVF…MLVY), 202–222 (FCMM…GVLF), 239–259 (GFAG…TFLV), and 263–283 (PWIG…GDLV).

The protein belongs to the CDS family.

It localises to the cell membrane. The catalysed reaction is a 1,2-diacyl-sn-glycero-3-phosphate + CTP + H(+) = a CDP-1,2-diacyl-sn-glycerol + diphosphate. It functions in the pathway phospholipid metabolism; CDP-diacylglycerol biosynthesis; CDP-diacylglycerol from sn-glycerol 3-phosphate: step 3/3. The sequence is that of Phosphatidate cytidylyltransferase (cdsA) from Mycobacterium tuberculosis (strain CDC 1551 / Oshkosh).